The chain runs to 86 residues: MAKKSLNETSPVARFEQSLEELEQLVQKMEVGDLSLEQSLTAYERGIGLYRDCQQALEQAELRVRLLTDPARPELAEAFEPPSLDG.

The protein belongs to the XseB family. As to quaternary structure, heterooligomer composed of large and small subunits.

It is found in the cytoplasm. The enzyme catalyses Exonucleolytic cleavage in either 5'- to 3'- or 3'- to 5'-direction to yield nucleoside 5'-phosphates.. In terms of biological role, bidirectionally degrades single-stranded DNA into large acid-insoluble oligonucleotides, which are then degraded further into small acid-soluble oligonucleotides. In Xanthomonas axonopodis pv. citri (strain 306), this protein is Exodeoxyribonuclease 7 small subunit.